Here is a 269-residue protein sequence, read N- to C-terminus: Diaminopimelate epimerase (269 aa).

Residues N15, Q49, and N66 each coordinate substrate. The active-site Proton donor is the C75. Substrate is bound by residues 76-77 (GN), N155, N187, and 204-205 (ER). The Proton acceptor role is filled by C213. 214–215 (GS) contacts substrate.

The protein belongs to the diaminopimelate epimerase family. Homodimer.

The protein localises to the cytoplasm. It catalyses the reaction (2S,6S)-2,6-diaminopimelate = meso-2,6-diaminopimelate. It functions in the pathway amino-acid biosynthesis; L-lysine biosynthesis via DAP pathway; DL-2,6-diaminopimelate from LL-2,6-diaminopimelate: step 1/1. Catalyzes the stereoinversion of LL-2,6-diaminopimelate (L,L-DAP) to meso-diaminopimelate (meso-DAP), a precursor of L-lysine and an essential component of the bacterial peptidoglycan. The sequence is that of Diaminopimelate epimerase from Rickettsia bellii (strain OSU 85-389).